Here is a 155-residue protein sequence, read N- to C-terminus: Ribosomal RNA large subunit methyltransferase H (155 aa).

Residues leucine 73, glycine 104, and 123–128 contribute to the S-adenosyl-L-methionine site; that span reads LSPLTL.

Belongs to the RNA methyltransferase RlmH family. As to quaternary structure, homodimer.

Its subcellular location is the cytoplasm. The catalysed reaction is pseudouridine(1915) in 23S rRNA + S-adenosyl-L-methionine = N(3)-methylpseudouridine(1915) in 23S rRNA + S-adenosyl-L-homocysteine + H(+). In terms of biological role, specifically methylates the pseudouridine at position 1915 (m3Psi1915) in 23S rRNA. This chain is Ribosomal RNA large subunit methyltransferase H, found in Pseudomonas putida (strain GB-1).